The following is a 562-amino-acid chain: SLAIN motif-containing protein-like (562 aa).

3 disordered regions span residues 292–313, 344–381, and 409–562; these read QDYA…LHSL, HRYS…IQNH, and SLEA…DGCY. 2 stretches are compositionally biased toward low complexity: residues 295–311 and 345–355; these read ASSS…ASLH and RYSPSPLSSPR. 4 stretches are compositionally biased toward polar residues: residues 356 to 370, 424 to 442, 465 to 531, and 539 to 553; these read CQSP…TTSR, QGPS…STPP, VSTS…STVP, and SRRS…STLG.

Belongs to the SLAIN motif-containing family.

The sequence is that of SLAIN motif-containing protein-like from Xenopus laevis (African clawed frog).